The chain runs to 284 residues: Tropomyosin Lep s 1.0101 (284 aa).

Residues 1 to 273 (MEAIKKKMQA…KDRYRALADE (273 aa)) adopt a coiled-coil conformation. The segment covering 155–171 (AEDADGKSDEVSRKMAQ) has biased composition (basic and acidic residues). Residues 155-187 (AEDADGKSDEVSRKMAQVEDDLEVAEDRVKSGD) form a disordered region.

It belongs to the tropomyosin family. In terms of assembly, homodimer.

Its function is as follows. Tropomyosin, in association with the troponin complex, plays a central role in the calcium dependent regulation of muscle contraction. This Lepisma saccharinum (Silverfish) protein is Tropomyosin Lep s 1.0101.